The sequence spans 71 residues: UPF0346 protein SPG_0874 (71 aa).

Belongs to the UPF0346 family.

This Streptococcus pneumoniae serotype 19F (strain G54) protein is UPF0346 protein SPG_0874.